A 97-amino-acid polypeptide reads, in one-letter code: Large ribosomal subunit protein bL28 (97 aa).

The disordered stretch occupies residues 1–20 (MSRRCELTAKGPQVGHKVSH).

It belongs to the bacterial ribosomal protein bL28 family.

The protein is Large ribosomal subunit protein bL28 of Afipia carboxidovorans (strain ATCC 49405 / DSM 1227 / KCTC 32145 / OM5) (Oligotropha carboxidovorans).